A 591-amino-acid chain; its full sequence is MMRSHYCGQLNESLDGQEVTLCGWVHRRRDHGGVIFLDIRDREGMAQVVFDPDRAETFAAADRVRSEYVVQITGKVRKRPDGAVNANMASGAIEILGYQLNVLNEAETPPFPLNEYSDVGEETRLRYRFIDLRRPEMADKLRLRSRITSSIRRFLDENGFLDVETPILTRATPEGARDYLVPSRTHAGSFFALPQSPQLFKQLLMVAGFDRYYQIAKCFRDEDLRADRQPEFTQIDIETSFLDESEIMGLTESMIRKLFKEVLDLEFGEFPHMTFEEAMRRYGSDKPDLRNPLELVDVADQLKDVDFKVFAGPANDPKCRVTALRLPGGASMPRSKIDEYTKFVGIYGARGLAYIKVNERAKGVEGLQSPIVKNIPEANLNVILDRVGAVDGDIVFFGADKFKVVSEALGALRIRLGHDFELLTCEWAPMWVVDFPMFEENEDGSFTALHHPFTAPKCTPEELEANPATALSRAYDMVLNGTELGGGSIRIHRKEMQQAVFRLLGIEAAEQEEKFGFLLDALKFGAPPHGGLAFGLDRLVMLMTGAQSIREVIAFPKTQSAACVMTQAPGLVDAKALRELHIRLREQTKVE.

E174 contacts L-aspartate. The aspartate stretch occupies residues 198-201 (QLFK). R220 provides a ligand contact to L-aspartate. Residues 220–222 (RDE) and Q229 contribute to the ATP site. H450 provides a ligand contact to L-aspartate. E483 contacts ATP. R490 is a binding site for L-aspartate. ATP is bound at residue 535–538 (GLDR).

It belongs to the class-II aminoacyl-tRNA synthetase family. Type 1 subfamily. Homodimer.

The protein localises to the cytoplasm. It carries out the reaction tRNA(Asx) + L-aspartate + ATP = L-aspartyl-tRNA(Asx) + AMP + diphosphate. Aspartyl-tRNA synthetase with relaxed tRNA specificity since it is able to aspartylate not only its cognate tRNA(Asp) but also tRNA(Asn). Reaction proceeds in two steps: L-aspartate is first activated by ATP to form Asp-AMP and then transferred to the acceptor end of tRNA(Asp/Asn). This chain is Aspartate--tRNA(Asp/Asn) ligase, found in Pseudomonas putida (strain W619).